The primary structure comprises 269 residues: Ethylene-responsive transcription factor ERN1 (269 aa).

The span at 1-15 (MEIQFQQPNLQQHQK) shows a compositional bias: polar residues. 2 disordered regions span residues 1 to 36 (MEIQ…NKFV) and 128 to 157 (DVPA…LSSG). Residues 34–91 (KFVGVRQRPSGRWVAEIKDTTQKIRMWLGTFETAEEAARAYDEAACLLRGSNTRTNFI) constitute a DNA-binding region (AP2/ERF). Low complexity predominate over residues 128-146 (DVPAPSASTTSTSSNTSNS).

The protein belongs to the AP2/ERF transcription factor family. ERF subfamily.

The protein localises to the nucleus. Its function is as follows. Transcription factor involved in the symbiotic nodule signaling pathway in response to rhizobial stimulation. Functions as a transcriptional regulator required for root infection by symbiotic rhizobia, infection thread (IT) formation, and nodule development. May coordinate these processes. Functions downstream of the CCAMK-CYCLOPS complex. Probably not involved in arbuscular mycorrhizal (AM) symbiosis. In Lotus japonicus (Lotus corniculatus var. japonicus), this protein is Ethylene-responsive transcription factor ERN1.